Consider the following 312-residue polypeptide: Ribose-phosphate pyrophosphokinase (312 aa).

ATP contacts are provided by residues 38-40 (DGE) and 97-98 (RQ). 2 residues coordinate Mg(2+): His131 and Asp170. Residue Lys193 is part of the active site. D-ribose 5-phosphate-binding positions include Arg195, Asp219, and 223–227 (DTAGT).

This sequence belongs to the ribose-phosphate pyrophosphokinase family. Class I subfamily. In terms of assembly, homohexamer. Mg(2+) serves as cofactor.

The protein resides in the cytoplasm. The enzyme catalyses D-ribose 5-phosphate + ATP = 5-phospho-alpha-D-ribose 1-diphosphate + AMP + H(+). It participates in metabolic intermediate biosynthesis; 5-phospho-alpha-D-ribose 1-diphosphate biosynthesis; 5-phospho-alpha-D-ribose 1-diphosphate from D-ribose 5-phosphate (route I): step 1/1. Its function is as follows. Involved in the biosynthesis of the central metabolite phospho-alpha-D-ribosyl-1-pyrophosphate (PRPP) via the transfer of pyrophosphoryl group from ATP to 1-hydroxyl of ribose-5-phosphate (Rib-5-P). The protein is Ribose-phosphate pyrophosphokinase of Leptospira interrogans serogroup Icterohaemorrhagiae serovar copenhageni (strain Fiocruz L1-130).